The chain runs to 555 residues: Formate--tetrahydrofolate ligase (555 aa).

65-72 (TPAGEGKS) contributes to the ATP binding site.

Belongs to the formate--tetrahydrofolate ligase family.

It carries out the reaction (6S)-5,6,7,8-tetrahydrofolate + formate + ATP = (6R)-10-formyltetrahydrofolate + ADP + phosphate. It functions in the pathway one-carbon metabolism; tetrahydrofolate interconversion. The protein is Formate--tetrahydrofolate ligase of Staphylococcus epidermidis (strain ATCC 35984 / DSM 28319 / BCRC 17069 / CCUG 31568 / BM 3577 / RP62A).